The chain runs to 587 residues: 65-kDa microtubule-associated protein 1 (587 aa).

Coiled-coil stretches lie at residues 46–84 (QECL…TMSL), 151–181 (DESD…LRKV), 234–257 (LTLK…LIDL), 290–317 (ALAR…MKEI), and 461–489 (AMLD…VQEQ). Residues 474 to 494 (EEEKRRLREQKKVQEQPHVEQ) are compositionally biased toward basic and acidic residues. Residues 474–587 (EEEKRRLREQ…AADHQVPASP (114 aa)) are disordered. Ser503 carries the phosphoserine modification. Phosphothreonine is present on Thr526. Over residues 531-542 (LSLNANQNGSRS) the composition is skewed to polar residues. Ser532 and Ser540 each carry phosphoserine. A phosphothreonine mark is found at Thr543 and Thr552. The span at 543 to 553 (TAKEAGRRETL) shows a compositional bias: basic and acidic residues. Ser573, Ser576, and Ser586 each carry phosphoserine.

The protein belongs to the MAP65/ASE1 family. In terms of assembly, forms dimer. Binds to MT, mostly with coaligned MT, both between parallel or antiparallel, forming thick bundles. Interacts with the alpha-tubulin subunit of the tubulin heterodimer. Bundles polymerized MT via the formation of 25-nm crossbridges at specific stages of the cell cycle (e.g. bundles microtubules in interphase, anaphase and telophase but does not bind microtubules in prophase or metaphase), at the plus-end, the minus-end, or along the entire length of MT, and along phragmoplast MT. Interacts with SH3P1 and MPK4. Post-translationally, basal phosphorylation at all stages of the cell cycle. MT-binding properties inhibited by hyperphosphorylation mediated by CDKs and/or MAPKs (e.g. ANP2, ANP3, MPK4 and MPK6) during prometaphase and metaphase. As to expression, expressed in all organs and tissues with the exception of sepals and anthers. Bound to subsets of microtubules in the cells of root epidermis, hypocotyl and cotyledons (at protein level).

It localises to the nucleus. The protein resides in the cytoplasm. It is found in the cytoskeleton. Its subcellular location is the spindle. The protein localises to the phragmoplast. It localises to the cell cortex. Its function is as follows. Microtubule-associated protein that bundle and stabilize adjacent microtubules (MT) of the cell cortex. Enhances MT nucleation. Can also bind to tubulin dimers and promotes their polymerization. Confers MT resistance to the drug propyzamide and cold conditions. Plays a role in the central spindle at anaphase to early cytokinesis but is not essential at the midline of the phragmoplast at later stages. Represses metaphase spindle organization and the transition to anaphase in dephosphorylated active form. Promotes the formation of a planar network of antiparallel microtubules. May be involved in stomatal movement modulation by regulating the dynamic and arrangement of cortical MT. The polypeptide is 65-kDa microtubule-associated protein 1 (MAP65-1) (Arabidopsis thaliana (Mouse-ear cress)).